The primary structure comprises 185 residues: Ribosome-recycling factor (185 aa).

Belongs to the RRF family.

It is found in the cytoplasm. Functionally, responsible for the release of ribosomes from messenger RNA at the termination of protein biosynthesis. May increase the efficiency of translation by recycling ribosomes from one round of translation to another. The polypeptide is Ribosome-recycling factor (Shewanella frigidimarina (strain NCIMB 400)).